A 274-amino-acid chain; its full sequence is tRNA-cytidine(32) 2-sulfurtransferase (274 aa).

Positions 40 to 45 match the PP-loop motif motif; the sequence is SGGKDS. [4Fe-4S] cluster-binding residues include cysteine 115, cysteine 118, and cysteine 206.

This sequence belongs to the TtcA family. As to quaternary structure, homodimer. It depends on Mg(2+) as a cofactor. The cofactor is [4Fe-4S] cluster.

It localises to the cytoplasm. The catalysed reaction is cytidine(32) in tRNA + S-sulfanyl-L-cysteinyl-[cysteine desulfurase] + AH2 + ATP = 2-thiocytidine(32) in tRNA + L-cysteinyl-[cysteine desulfurase] + A + AMP + diphosphate + H(+). It participates in tRNA modification. In terms of biological role, catalyzes the ATP-dependent 2-thiolation of cytidine in position 32 of tRNA, to form 2-thiocytidine (s(2)C32). The sulfur atoms are provided by the cysteine/cysteine desulfurase (IscS) system. The sequence is that of tRNA-cytidine(32) 2-sulfurtransferase from Pseudomonas entomophila (strain L48).